A 459-amino-acid chain; its full sequence is tRNA uridine(34) acetyltransferase (459 aa).

The interval 1–278 is radical S-adenosyl-L-methionine (rSAM); it reads MKKLSRTISG…VPPYVRISRV (278 aa). The 266-residue stretch at 6–271 folds into the Radical SAM core domain; the sequence is RTISGVTPVA…IADIKALVPP (266 aa). Residues C23, C27, and C30 each coordinate [4Fe-4S] cluster. Position 77 (K77) interacts with acetyl-CoA. The interval 308–459 is N-acetyltransferase; that stretch reads QKCRCIRCRE…VAGYMCKHLD (152 aa). 3 residues coordinate Zn(2+): C310, C312, and C315. Acetyl-CoA-binding positions include 386–389, 409–411, and Y442; these read ELHV and LGR.

Belongs to the ELP3 family. In terms of assembly, homodimer. It depends on [4Fe-4S] cluster as a cofactor.

The catalysed reaction is uridine(34) in tRNA + acetyl-CoA + S-adenosyl-L-methionine + H2O = 5-(carboxymethyl)uridine(34) in tRNA + 5'-deoxyadenosine + L-methionine + CoA + 2 H(+). The protein operates within tRNA modification. TRNA uridine(34) acetyltransferase, which mediates formation of carboxymethyluridine in the wobble base at position 34 in tRNAs. The proposed mechanism is the following: (i) recruits S-adenosyl-L-methionine and cleaves it to generate a 5'-deoxyadenosine radical (5'-dA) in the radical S-adenosyl-L-methionine (rSAM) region, (ii) hydrolyzes acetyl-CoA in the N-acetyltransferase domain and (iii) an acetyl radical is formed by the products of the two domains and (iv) is transferred onto the C5 position of uridine(34) in the bound tRNA molecule. Does not show protein lysine acetyltransferase activity. The protein is tRNA uridine(34) acetyltransferase of Dehalococcoides mccartyi (strain CBDB1).